A 446-amino-acid chain; its full sequence is MAGAEVEEEAGIPKKIESTEEVLIKCQCWVRKDEEERLAEILSINARVSPSKFYVHYVNFNKRLDEWVTGDRINLDKEVIFPRPKRQLEEDTNKKQKKKKKFPQKAAVVESDAKSSEMGEGSDVMDLDNLNVRGLKDEEISREDEIKKLRTSGSMIQNPHEVAHVRNLSKIIMGKFEIEPWYFSPYPIELTDLDVVYIDDFTLQYFGSRKQYERYRKKCTLRHPPGNEIYRDDYVSFFEIDGRKQRTWCRNLCLLSKLFLDHKTLYYDVDPFLFYCMTRRDEMGHHFVGYFSKEKESADGYNVACILTLPQYQRMGYGRLLIEFSYELSKKEGKVGSPEKPLSDLGLLSYRAYWSDVLITLLVEHGKEVTIDEISSMTSMTTTDILHTLKTLNILRYYKGQHIIFLNDDILERYNQLKTKKRRHIDAEKLLWKPPVFTASQLRFAW.

The 52-residue stretch at 24-75 (IKCQCWVRKDEEERLAEILSINARVSPSKFYVHYVNFNKRLDEWVTGDRINL) folds into the Tudor-knot domain. The interval 86–121 (RQLEEDTNKKQKKKKKFPQKAAVVESDAKSSEMGEG) is disordered. The region spanning 163–434 (AHVRNLSKII…IDAEKLLWKP (272 aa)) is the MYST-type HAT domain. The segment at 196–221 (VYIDDFTLQYFGSRKQYERYRKKCTL) adopts a C2HC MYST-type; degenerate zinc-finger fold. Positions 246-267 (RTWCRNLCLLSKLFLDHKTLYY) match the ESA1-RPD3 motif motif. Residue Lys263 is modified to N6-acetyllysine; by autocatalysis. Residues 304-308 (ACILT) and 313-319 (QRMGYGR) contribute to the acetyl-CoA site. Glu339 acts as the Proton donor/acceptor in catalysis. Residue Ser343 coordinates acetyl-CoA.

It belongs to the MYST (SAS/MOZ) family. As to quaternary structure, component of the NuA4 histone acetyltransferase complex. In terms of processing, autoacetylation at Lys-263 is required for proper function.

The protein resides in the nucleus. The protein localises to the chromosome. The catalysed reaction is L-lysyl-[histone] + acetyl-CoA = N(6)-acetyl-L-lysyl-[histone] + CoA + H(+). It carries out the reaction L-lysyl-[protein] + acetyl-CoA = N(6)-acetyl-L-lysyl-[protein] + CoA + H(+). The enzyme catalyses 2-hydroxyisobutanoyl-CoA + L-lysyl-[protein] = N(6)-(2-hydroxyisobutanoyl)-L-lysyl-[protein] + CoA + H(+). It catalyses the reaction (2E)-butenoyl-CoA + L-lysyl-[protein] = N(6)-(2E)-butenoyl-L-lysyl-[protein] + CoA + H(+). Functionally, catalytic component of the NuA4 histone acetyltransferase (HAT) complex which is involved in epigenetic transcriptional activation of selected genes principally by acetylation of nucleosomal histones H4, H3, H2B, H2A and H2A variant H2A.Z. Acetylates histone H4 to form H4K5ac, H4K8ac, H4K12ac and H4K16ac, histone H3 to form H3K14ac, and histone H2A to form H2AK4ac and H2AK7ac. The NuA4 complex is involved in the DNA damage response and is required for chromosome segregation. The NuA4 complex plays a direct role in repair of DNA double-strand breaks (DSBs) through homologous recombination. Recruitment to promoters depends on H3K4me. Also acetylates non-histone proteins. In addition to protein acetyltransferase, can use different acyl-CoA substrates, such as 2-hydroxyisobutanoyl-CoA (2-hydroxyisobutyryl-CoA) or (2E)-butenoyl-CoA (crotonyl-CoA), and is able to mediate protein 2-hydroxyisobutyrylation and crotonylation, respectively. The chain is Histone acetyltransferase ESA1 (ESA1) from Candida glabrata (strain ATCC 2001 / BCRC 20586 / JCM 3761 / NBRC 0622 / NRRL Y-65 / CBS 138) (Yeast).